The chain runs to 543 residues: T-complex protein 1 subunit gamma (543 aa).

The protein belongs to the TCP-1 chaperonin family.

The protein localises to the cytoplasm. In terms of biological role, molecular chaperone; assists the folding of proteins upon ATP hydrolysis. Known to play a role, in vitro, in the folding of actin and tubulin. Plays a role in microtubule polymerization. The protein is T-complex protein 1 subunit gamma of Caenorhabditis elegans.